Here is a 374-residue protein sequence, read N- to C-terminus: uncharacterized protein (374 aa).

The tract at residues 182–201 (PALGESPQGQKSSASSDKAV) is disordered. Positions 188-197 (PQGQKSSASS) are enriched in polar residues.

This is an uncharacterized protein from Rattus norvegicus (Rat).